We begin with the raw amino-acid sequence, 191 residues long: Molybdenum cofactor guanylyltransferase (191 aa).

GTP-binding positions include 13-15 (LAG), Lys-26, Asp-72, and Asp-102. A Mg(2+)-binding site is contributed by Asp-102.

This sequence belongs to the MobA family. Monomer. It depends on Mg(2+) as a cofactor.

It localises to the cytoplasm. The enzyme catalyses Mo-molybdopterin + GTP + H(+) = Mo-molybdopterin guanine dinucleotide + diphosphate. Its function is as follows. Transfers a GMP moiety from GTP to Mo-molybdopterin (Mo-MPT) cofactor (Moco or molybdenum cofactor) to form Mo-molybdopterin guanine dinucleotide (Mo-MGD) cofactor. In Pseudomonas entomophila (strain L48), this protein is Molybdenum cofactor guanylyltransferase.